The primary structure comprises 98 residues: Integration host factor subunit alpha (98 aa).

Residues 49–70 (FGNFDLRDKNQRPGRNPKTGED) form a disordered region.

It belongs to the bacterial histone-like protein family. In terms of assembly, heterodimer of an alpha and a beta chain.

Its function is as follows. This protein is one of the two subunits of integration host factor, a specific DNA-binding protein that functions in genetic recombination as well as in transcriptional and translational control. The protein is Integration host factor subunit alpha of Shewanella baltica (strain OS223).